Here is a 171-residue protein sequence, read N- to C-terminus: 3-hydroxydecanoyl-[acyl-carrier-protein] dehydratase (171 aa).

The active site involves H70.

The protein belongs to the thioester dehydratase family. FabA subfamily. Homodimer.

It is found in the cytoplasm. It catalyses the reaction a (3R)-hydroxyacyl-[ACP] = a (2E)-enoyl-[ACP] + H2O. The catalysed reaction is (3R)-hydroxydecanoyl-[ACP] = (2E)-decenoyl-[ACP] + H2O. The enzyme catalyses (2E)-decenoyl-[ACP] = (3Z)-decenoyl-[ACP]. It functions in the pathway lipid metabolism; fatty acid biosynthesis. Functionally, necessary for the introduction of cis unsaturation into fatty acids. Catalyzes the dehydration of (3R)-3-hydroxydecanoyl-ACP to E-(2)-decenoyl-ACP and then its isomerization to Z-(3)-decenoyl-ACP. Can catalyze the dehydratase reaction for beta-hydroxyacyl-ACPs with saturated chain lengths up to 16:0, being most active on intermediate chain length. This Pseudomonas fluorescens (strain SBW25) protein is 3-hydroxydecanoyl-[acyl-carrier-protein] dehydratase.